Here is a 1120-residue protein sequence, read N- to C-terminus: DNA-directed RNA polymerase subunit beta (1120 aa).

It belongs to the RNA polymerase beta chain family. In terms of assembly, in plastids the minimal PEP RNA polymerase catalytic core is composed of four subunits: alpha, beta, beta', and beta''. When a (nuclear-encoded) sigma factor is associated with the core the holoenzyme is formed, which can initiate transcription.

The protein resides in the plastid. It is found in the chloroplast. It carries out the reaction RNA(n) + a ribonucleoside 5'-triphosphate = RNA(n+1) + diphosphate. Functionally, DNA-dependent RNA polymerase catalyzes the transcription of DNA into RNA using the four ribonucleoside triphosphates as substrates. The sequence is that of DNA-directed RNA polymerase subunit beta from Gracilaria tenuistipitata var. liui (Red alga).